A 95-amino-acid polypeptide reads, in one-letter code: Integration host factor subunit beta (95 aa).

Belongs to the bacterial histone-like protein family. Heterodimer of an alpha and a beta chain.

Its function is as follows. This protein is one of the two subunits of integration host factor, a specific DNA-binding protein that functions in genetic recombination as well as in transcriptional and translational control. The polypeptide is Integration host factor subunit beta (Klebsiella pneumoniae subsp. pneumoniae (strain ATCC 700721 / MGH 78578)).